The chain runs to 115 residues: U3-lycotoxin-Ls1a (115 aa).

The signal sequence occupies residues 1-20 (MKFVLLFGVFLVTLFSYSSA). The propeptide occupies 21–44 (EMLDDFDQADEDELLSLIEKEEAR). Intrachain disulfides connect Cys48/Cys63, Cys55/Cys72, Cys62/Cys87, and Cys74/Cys85.

The protein belongs to the neurotoxin 19 (CSTX) family. 01 subfamily. In terms of tissue distribution, expressed by the venom gland.

The protein resides in the secreted. The protein is U3-lycotoxin-Ls1a of Lycosa singoriensis (Wolf spider).